The primary structure comprises 483 residues: Putative inorganic phosphate cotransporter (483 aa).

The next 7 membrane-spanning stretches (helical) occupy residues 64–84, 90–110, 187–207, 292–312, 349–369, 383–403, and 420–440; these read YILS…GILA, LRFL…VPVA, IFYV…IFVY, LPYL…DWMI, ALTL…YSGF, FLMS…PIAA, and IVFF…NIFG. The tract at residues 447–483 is disordered; the sequence is WDNPSEDEQKPALESSSTTNPPRLSNGSSAPRAISSS. The span at 460 to 483 shows a compositional bias: polar residues; it reads ESSSTTNPPRLSNGSSAPRAISSS.

Belongs to the major facilitator superfamily. Sodium/anion cotransporter family.

It localises to the membrane. Its function is as follows. May be an inorganic phosphate cotransporter. The protein is Putative inorganic phosphate cotransporter (Picot) of Drosophila ananassae (Fruit fly).